A 204-amino-acid chain; its full sequence is Nascent polypeptide-associated complex subunit alpha (204 aa).

Over residues 1-19 the composition is skewed to basic and acidic residues; that stretch reads MADPRVEELPDEEVPKTNV. Disordered stretches follow at residues 1–48 and 119–167; these read MADP…HSRN and LAAA…GLEA. The span at 22–32 shows a compositional bias: acidic residues; it reads AGSDSESEAGE. Residues 46–111 form the NAC-A/B domain; it reads SRNEKKARKA…AKIEDLNSQA (66 aa). A compositionally biased stretch (low complexity) spans 119–128; it reads LAAAEAAAGE. Over residues 129 to 151 the composition is skewed to basic and acidic residues; it reads HAGHDHDHDHGKGKAPETEAKKE. Residues 152-164 are compositionally biased toward acidic residues; sequence EEEDDGEEVDETG. Positions 165–204 constitute a UBA domain; that stretch reads LEAKDIELVMAQANVSRKKAVKALRENDNDIVNSIMALSI.

It belongs to the NAC-alpha family. Part of the nascent polypeptide-associated complex (NAC), consisting of egd2 and egd1. NAC associates with ribosomes via egd1.

The protein localises to the cytoplasm. It is found in the nucleus. In terms of biological role, component of the nascent polypeptide-associated complex (NAC), a dynamic component of the ribosomal exit tunnel, protecting the emerging polypeptides from interaction with other cytoplasmic proteins to ensure appropriate nascent protein targeting. The NAC complex also promotes mitochondrial protein import by enhancing productive ribosome interactions with the outer mitochondrial membrane and blocks the inappropriate interaction of ribosomes translating non-secretory nascent polypeptides with translocation sites in the membrane of the endoplasmic reticulum. Egd2 may also be involved in transcription regulation. The polypeptide is Nascent polypeptide-associated complex subunit alpha (egd2) (Aspergillus clavatus (strain ATCC 1007 / CBS 513.65 / DSM 816 / NCTC 3887 / NRRL 1 / QM 1276 / 107)).